The chain runs to 486 residues: MSSSSPPAGAASAAISASEKVDGFTRKSVRKAQRQKRSQGSSQFRSQGSQAELHPLPQLKDATSNEQQELFCQKLQQCCILFDFMDSVSDLKSKEIKRATLNELVEYVSTNRGVIVESAYSDIVKMISANIFRTLPPSDNPDFDPEEDEPTLEASWPHIQLVYEFFLRFLESPDFQPSIAKRYIDQKFVQQLLELFDSEDPRERDFLKTVLHRIYGKFLGLRAFIRKQINNIFLRFIYETEHFNGVAELLEILGSIINGFALPLKAEHKQFLMKVLIPMHTAKGLALFHAQLAYCVVQFLEKDTTLTEPVIRGLLKFWPKTCSQKEVMFLGEIEEILDVIEPTQFKKIEEPLFKQISKCVSSSHFQVAERALYFWNNEYILSLIEENIDKILPIMFASLYKISKEHWNPTIVALVYNVLKTLMEMNGKLFDDLTSSYKAERQREKKKELEREELWKKLEELKLKKALEKQNSAYNMHSILSNTSAE.

The span at 1–18 (MSSSSPPAGAASAAISAS) shows a compositional bias: low complexity. Residues 1-52 (MSSSSPPAGAASAAISASEKVDGFTRKSVRKAQRQKRSQGSSQFRSQGSQAE) are disordered. The residue at position 2 (serine 2) is an N-acetylserine. Over residues 27–37 (KSVRKAQRQKR) the composition is skewed to basic residues. Residues 38-51 (SQGSSQFRSQGSQA) show a composition bias toward low complexity. A phosphoserine mark is found at serine 41, serine 42, and serine 49.

Belongs to the phosphatase 2A regulatory subunit B56 family. PP2A consists of a common heterodimeric core enzyme, composed of a 36 kDa catalytic subunit (subunit C) and a 65 kDa constant regulatory subunit (PR65 or subunit A), that associates with a variety of regulatory subunits. Proteins that associate with the core dimer include three families of regulatory subunits B (the R2/B/PR55/B55, R3/B''/PR72/PR130/PR59 and R5/B'/B56 families), the 48 kDa variable regulatory subunit, viral proteins, and cell signaling molecules. Interacts with SGO1. Post-translationally, phosphorylated on serine residues. As to expression, widely expressed with the highest expression in heart and skeletal muscle.

Its subcellular location is the cytoplasm. The protein localises to the nucleus. It localises to the chromosome. The protein resides in the centromere. In terms of biological role, the B regulatory subunit might modulate substrate selectivity and catalytic activity, and might also direct the localization of the catalytic enzyme to a particular subcellular compartment. The chain is Serine/threonine-protein phosphatase 2A 56 kDa regulatory subunit alpha isoform (PPP2R5A) from Homo sapiens (Human).